The chain runs to 829 residues: Periplasmic nitrate reductase (829 aa).

The tat-type signal signal peptide spans 1–30; that stretch reads MKMTRRAFVKANAAASAAAVAGITLPASAA. The 4Fe-4S Mo/W bis-MGD-type domain occupies 41 to 97; it reads ITWDKAPCRFCGTGCSVLVGTQNGKVVATQGDPEAPVNKGLNCIKGYFLSKIMYGQD. Positions 48, 51, 55, and 83 each coordinate [4Fe-4S] cluster. Mo-bis(molybdopterin guanine dinucleotide)-binding positions include Lys-85, Gln-152, Asn-177, Cys-181, 214-221, 245-249, 264-266, Met-374, Gln-378, Asn-484, 510-511, Lys-533, Asp-560, and 718-727; these read WGSNMAEM, STYYH, QSD, SD, and TGRVLEHWHT. Phe-794 serves as a coordination point for substrate. Mo-bis(molybdopterin guanine dinucleotide) contacts are provided by Asn-802 and Lys-819.

It belongs to the prokaryotic molybdopterin-containing oxidoreductase family. NasA/NapA/NarB subfamily. In terms of assembly, component of the periplasmic nitrate reductase NapAB complex composed of NapA and NapB. The cofactor is [4Fe-4S] cluster. Requires Mo-bis(molybdopterin guanine dinucleotide) as cofactor. In terms of processing, predicted to be exported by the Tat system. The position of the signal peptide cleavage has not been experimentally proven.

It is found in the periplasm. The enzyme catalyses 2 Fe(II)-[cytochrome] + nitrate + 2 H(+) = 2 Fe(III)-[cytochrome] + nitrite + H2O. Functionally, catalytic subunit of the periplasmic nitrate reductase complex NapAB. Receives electrons from NapB and catalyzes the reduction of nitrate to nitrite. In Vibrio parahaemolyticus serotype O3:K6 (strain RIMD 2210633), this protein is Periplasmic nitrate reductase.